A 218-amino-acid chain; its full sequence is Probable transaldolase (218 aa).

Lysine 87 (schiff-base intermediate with substrate) is an active-site residue.

It belongs to the transaldolase family. Type 3B subfamily.

It localises to the cytoplasm. The enzyme catalyses D-sedoheptulose 7-phosphate + D-glyceraldehyde 3-phosphate = D-erythrose 4-phosphate + beta-D-fructose 6-phosphate. The protein operates within carbohydrate degradation; pentose phosphate pathway; D-glyceraldehyde 3-phosphate and beta-D-fructose 6-phosphate from D-ribose 5-phosphate and D-xylulose 5-phosphate (non-oxidative stage): step 2/3. Functionally, transaldolase is important for the balance of metabolites in the pentose-phosphate pathway. This chain is Probable transaldolase, found in Phocaeicola vulgatus (strain ATCC 8482 / DSM 1447 / JCM 5826 / CCUG 4940 / NBRC 14291 / NCTC 11154) (Bacteroides vulgatus).